A 1001-amino-acid polypeptide reads, in one-letter code: ATP-dependent DNA/RNA helicase DHX36 (1001 aa).

The tract at residues 1–44 (MSYDYHQSWSRDGGPRGSGQGSSGGGGGGSRGSGGGGGGRGGRG) is required for recruitment to cytoplasmic stress granules. A disordered region spans residues 1–54 (MSYDYHQSWSRDGGPRGSGQGSSGGGGGGSRGSGGGGGGRGGRGRHPAHLKGRE). Residues 1 to 97 (MSYDYHQSWS…IVQLLNSVQA (97 aa)) are required for the pre-miR-134 transport. The tract at residues 1-193 (MSYDYHQSWS…KKTDPRYIEM (193 aa)) is necessary for nuclear and nucleolar caps localizations. Positions 15–41 (PRGSGQGSSGGGGGGSRGSGGGGGGRG) are enriched in gly residues. A DSM (DHX36-specific motif) region spans residues 46 to 68 (HPAHLKGREIGLWYAKKQTQKNK). A required for G4-DNA- and G4-RNA-binding region spans residues 46 to 98 (HPAHLKGREIGLWYAKKQTQKNKEAERQERAVVHMDERREEQIVQLLNSVQAK). RecA-like domain regions lie at residues 99-379 (TDKD…MIHI) and 380-621 (PGFT…DYQL). A coiled-coil region spans residues 120-147 (EVSSEKKINSEKKLDNQEKKLLNQEKKT). A Phosphoserine modification is found at S154. In terms of domain architecture, Helicase ATP-binding spans 210 to 380 (VNLINNHQVT…FGNCPMIHIP (171 aa)). 226–231 (GCGKTT) is an ATP binding site. Positions 258-310 (RRISAISVAERVATERAESCGNGNSTGYQIRLQSRLPRKQGSILYCTTGIILQ) are necessary for interaction with single-stranded DNA at the 3'-end of the G4-DNA structure. Positions 327 to 330 (DEIH) match the DEAH box motif. E328 and H330 together coordinate Mg(2+). In terms of domain architecture, Helicase C-terminal spans 470–640 (ALIRYIVLEE…ELCLQIKILR (171 aa)). Residues 491–550 (WDNISTLHDLLMSQVMFKSDKFLIIPLHSLMPTVNQTQVFKKTPPGVRKIVIATNIAETS) are necessary for interaction with single-stranded DNA at the 3'-end of the G4-DNA structure. The short motif at 510-521 (DKFLIIPLHSLM) is the Nuclear localization signal element. ATP contacts are provided by residues S550 and 595 to 598 (RAGR). The interval 622–691 (PEILRTPLEE…LGVHLARLPV (70 aa)) is WH domain. Necessary for interaction with single-stranded DNA at the 3'-end of the G4-DNA structure stretches follow at residues 631 to 690 (ELCL…ARLP), 842 to 853 (NLGKKRKMVKVH), and 863 to 893 (HPKS…IYLY). Residues 834-898 (PKVAKIRLNL…SIYLYDCTEV (65 aa)) form an OB-fold-like subdomains region. At K940 the chain carries N6-acetyllysine. S956 is modified (phosphoserine).

Belongs to the DEAD box helicase family. DEAH subfamily. As to quaternary structure, found in a multi-helicase-TICAM1 complex at least composed of DHX36, DDX1, DDX21 and TICAM1; this complex exists in resting cells with or without dsRNA poly(I:C) ligand stimulation. Interacts (via C-terminus) with TICAM1 (via TIR domain). Interacts (via C-terminus) with DDX21; this interaction serves as bridges to TICAM1. Interacts with TERT; this interaction is dependent on the ability of DHX36 to bind to the G-quadruplex RNA (G4-RNA) structure present in the telomerase RNA template component (TERC). Interacts with DKC1; this interaction is dependent on the ability of DHX36 to bind to the G4-RNA structure present in TERC. Interacts with PARN; this interaction stimulates PARN to enhance uPA mRNA decay. Interacts with EXOSC3; this interaction occurs in a RNase-insensitive manner. Interacts with EXOSC10; this interaction occurs in a RNase-insensitive manner. Interacts with ILF3; this interaction occurs in a RNA-dependent manner. Interacts with ELAVL1; this interaction occurs in an RNA-dependent manner. Interacts with DDX5; this interaction occurs in a RNA-dependent manner. Interacts with DDX17; this interaction occurs in a RNA-dependent manner. Interacts with HDAC1; this interaction occurs in a RNA-dependent manner. Interacts with HDAC3; this interaction occurs in a RNA-dependent manner. Interacts with HDAC4. Interacts with AGO1. Interacts with AGO2. Interacts with ERCC6. Requires Mg(2+) as cofactor. As to expression, expressed in spermatogonia stem cells and primary spermatocytes (at protein level). Expressed strongly in testis. Weakly expressed in heart, lung, liver, kidney, small intestine, spleen, lymphe node and thymus.

It is found in the nucleus. It localises to the cytoplasm. The protein resides in the cytosol. Its subcellular location is the stress granule. The protein localises to the nucleus speckle. It is found in the chromosome. It localises to the telomere. The protein resides in the mitochondrion. Its subcellular location is the perikaryon. The protein localises to the cell projection. It is found in the dendrite. It localises to the axon. It catalyses the reaction ATP + H2O = ADP + phosphate + H(+). With respect to regulation, ATPase activity is enhanced in the presence of homomeric poly(U) RNAs, but not by double-stranded DNA (dsDNA), double-stranded RNA (dsRNA) and tRNA. Functionally, multifunctional ATP-dependent helicase that unwinds G-quadruplex (G4) structures. Plays a role in many biological processes such as genomic integrity, gene expression regulations and as a sensor to initiate antiviral responses. G4 structures correspond to helical structures containing guanine tetrads. Binds with high affinity to and unwinds G4 structures that are formed in nucleic acids (G4-DNA and G4-RNA). Plays a role in genomic integrity. Converts the G4-RNA structure present in telomerase RNA template component (TREC) into a double-stranded RNA to promote P1 helix formation that acts as a template boundary ensuring accurate reverse transcription. Plays a role in transcriptional regulation. Resolves G4-DNA structures in promoters of genes, such as YY1, KIT/c-kit and ALPL and positively regulates their expression. Plays a role in post-transcriptional regulation. Unwinds a G4-RNA structure located in the 3'-UTR polyadenylation site of the pre-mRNA TP53 and stimulates TP53 pre-mRNA 3'-end processing in response to ultraviolet (UV)-induced DNA damage. Binds to the precursor-microRNA-134 (pre-miR-134) terminal loop and regulates its transport into the synapto-dendritic compartment. Involved in the pre-miR-134-dependent inhibition of target gene expression and the control of dendritic spine size. Plays a role in the regulation of cytoplasmic mRNA translation and mRNA stability. Binds to both G4-RNA structures and alternative non-quadruplex-forming sequence within the 3'-UTR of the PITX1 mRNA regulating negatively PITX1 protein expression. Binds to both G4-RNA structure in the 5'-UTR and AU-rich elements (AREs) localized in the 3'-UTR of NKX2-5 mRNA to either stimulate protein translation or induce mRNA decay in an ELAVL1-dependent manner, respectively. Also binds to ARE sequences present in several mRNAs mediating exosome-mediated 3'-5' mRNA degradation. Involved in cytoplasmic urokinase-type plasminogen activator (uPA) mRNA decay. Component of a multi-helicase-TICAM1 complex that acts as a cytoplasmic sensor of viral double-stranded RNA (dsRNA) and plays a role in the activation of a cascade of antiviral responses including the induction of pro-inflammatory cytokines via the adapter molecule TICAM1. Required for the early embryonic development and hematopoiesis. Involved in the regulation of cardioblast differentiation and proliferation during heart development. Involved in spermatogonia differentiation. May play a role in ossification. The polypeptide is ATP-dependent DNA/RNA helicase DHX36 (Mus musculus (Mouse)).